The chain runs to 439 residues: Proline--tRNA ligase (439 aa).

The protein belongs to the class-II aminoacyl-tRNA synthetase family. ProS type 2 subfamily. Homodimer.

Its subcellular location is the cytoplasm. The catalysed reaction is tRNA(Pro) + L-proline + ATP = L-prolyl-tRNA(Pro) + AMP + diphosphate. Catalyzes the attachment of proline to tRNA(Pro) in a two-step reaction: proline is first activated by ATP to form Pro-AMP and then transferred to the acceptor end of tRNA(Pro). The polypeptide is Proline--tRNA ligase (Hyphomonas neptunium (strain ATCC 15444)).